Reading from the N-terminus, the 198-residue chain is Ribosome maturation factor RimP (198 aa).

It belongs to the RimP family.

The protein localises to the cytoplasm. In terms of biological role, required for maturation of 30S ribosomal subunits. This is Ribosome maturation factor RimP from Rhizobium etli (strain CIAT 652).